Here is a 468-residue protein sequence, read N- to C-terminus: Phenylalanine--tRNA ligase alpha subunit (468 aa).

L-phenylalanine contacts are provided by residues Thr311, 350–352 (QLD), and Phe390. Glu392 contacts Mg(2+).

Belongs to the class-II aminoacyl-tRNA synthetase family. Phe-tRNA synthetase alpha subunit type 2 subfamily. Tetramer of two alpha and two beta subunits. It depends on Mg(2+) as a cofactor.

The protein localises to the cytoplasm. It carries out the reaction tRNA(Phe) + L-phenylalanine + ATP = L-phenylalanyl-tRNA(Phe) + AMP + diphosphate + H(+). In Saccharolobus solfataricus (strain ATCC 35092 / DSM 1617 / JCM 11322 / P2) (Sulfolobus solfataricus), this protein is Phenylalanine--tRNA ligase alpha subunit.